Reading from the N-terminus, the 470-residue chain is Iron-sulfur cluster assembly protein SufB (470 aa).

The protein belongs to the iron-sulfur cluster assembly SufBD family. Component of a complex composed of SufB, SufC and SufD in a stoichiometric ratio of 1:2:1. Interacts with SufC. Interacts with SufD.

Its pathway is cofactor biosynthesis; iron-sulfur cluster biosynthesis. Functionally, participates in the sulfur mobilization (SUF) pathway for iron-sulfur (Fe-S) cluster biogenesis. As part of a complex consisting of SufB-SufC(2)-SufD, involved in assembly of [4Fe-4S] clusters. Exhibits ATPase activity. The sequence is that of Iron-sulfur cluster assembly protein SufB from Plasmodium falciparum (isolate 3D7).